The sequence spans 270 residues: Putative hydro-lyase ACIAD2519 (270 aa).

This sequence belongs to the D-glutamate cyclase family.

The protein is Putative hydro-lyase ACIAD2519 of Acinetobacter baylyi (strain ATCC 33305 / BD413 / ADP1).